We begin with the raw amino-acid sequence, 438 residues long: Coenzyme A disulfide reductase (438 aa).

8–33 (GAVAGGATCASQIRRLDKESDIIIFE) contributes to the FAD binding site. 5 residues coordinate substrate: T15, Q19, R22, S39, and N42. C43 (nucleophile) is an active-site residue. C43 acts as the Redox-active in catalysis. K71 provides a ligand contact to substrate. 151 to 166 (VLVVGAGYVSLEVLEN) is an NADP(+) binding site. 267-277 (TNVPNIYAIGD) contacts FAD. H299 is a substrate binding site. An FAD-binding site is contributed by Y419. A substrate-binding site is contributed by K427.

This sequence belongs to the class-III pyridine nucleotide-disulfide oxidoreductase family. In terms of assembly, homodimer. The cofactor is FAD.

It catalyses the reaction NADP(+) + 2 CoA = CoA-disulfide + NADPH + H(+). Functionally, catalyzes specifically the NADPH-dependent reduction of coenzyme A disulfide. The polypeptide is Coenzyme A disulfide reductase (Staphylococcus aureus (strain COL)).